We begin with the raw amino-acid sequence, 255 residues long: DNA repair protein RecO (255 aa).

This sequence belongs to the RecO family.

Functionally, involved in DNA repair and RecF pathway recombination. This chain is DNA repair protein RecO, found in Listeria monocytogenes serotype 4b (strain CLIP80459).